The chain runs to 624 residues: Double-stranded RNA-binding protein Staufen homolog 2 (624 aa).

DRBM domains lie at S55–A122, Q142–S228, M254–G321, R354–Q422, and L540–D604. Positions L197–N223 are disordered. A compositionally biased stretch (basic and acidic residues) spans R214 to N223. 2 disordered regions span residues E401–G428 and P592–V624. The segment covering Q415–P426 has biased composition (polar residues). Positions A596–N605 are enriched in basic and acidic residues.

In terms of biological role, RNA-binding protein required for the microtubule-dependent transport of RNAs within polarized cell types. The sequence is that of Double-stranded RNA-binding protein Staufen homolog 2 (stau2) from Xenopus tropicalis (Western clawed frog).